A 150-amino-acid polypeptide reads, in one-letter code: Troponin C, isoform 1 (150 aa).

Methionine 1 carries the post-translational modification N-acetylmethionine. EF-hand domains follow at residues 7–42 (DQVQ…MGVK), 43–78 (ISDR…FLSE), 83–118 (ALKK…LDNK), and 119–150 (LTED…MMNG). Aspartate 56, aspartate 58, serine 60, glutamate 62, and glutamate 67 together coordinate Ca(2+). Residues aspartate 132, aspartate 134, serine 136, threonine 138, and glutamate 143 each coordinate Ca(2+).

It belongs to the troponin C family.

Its function is as follows. Troponin is the central regulatory protein of striated muscle contraction. Tn consists of three components: Tn-I which is the inhibitor of actomyosin ATPase, Tn-T which contains the binding site for tropomyosin and Tn-C. The binding of calcium to Tn-C abolishes the inhibitory action of Tn on actin filaments. This Homarus americanus (American lobster) protein is Troponin C, isoform 1.